The following is a 522-amino-acid chain: MKHRTFFSLCAKFGCLLALGACSPKIVDAGTATVPHTLSTLKTADNRPASVYLKKDKPTLIKFWASWCPLCLSELGQAEKWAQDAKFSSANLITVASPGFLHEKKDGEFQKWYAGLNYPKLPVVTDNGGTIAQNLNISVYPSWALIGKDGDVQRIVKGSINEAQALALIRNPNADLGSLKHSFYKPDTQKKDSAIMNTRTIYLAGGCFWGLEAYFQRIDGVVDAVSGYANGNTENPSYEDVSYRHTGHAETVKVTYDADKLSLDDILQYYFRVVDPTSLNKQGNDTGTQYRSGVYYTDPAEKAVIAAALKREQQKYQLPLVVENEPLKNFYDAEEYHQDYLIKNPNGYCHIDIRKADEPLPGKTKAAPQGKGFDAATYKKPSDAELKRTLTEEQYQVTQNSATEYAFSHEYDHLFKPGIYVDVVSGEPLFSSADKYDSGCGWPSFTRPIDAKSVTEHDDFSFNMRRTEVRSRAADSHLGHVFPDGPRDKGGLRYCINGASLKFIPLEQMDAAGYGALKGEVK.

The Thioredoxin domain maps to 17-174 (LALGACSPKI…ALALIRNPNA (158 aa)). Cysteine 68 and cysteine 71 are joined by a disulfide. The segment at 199-354 (RTIYLAGGCF…PNGYCHIDIR (156 aa)) is peptide methionine sulfoxide reductase A. Residue cysteine 207 is part of the active site. A MsrB domain is found at 383 to 506 (DAELKRTLTE…NGASLKFIPL (124 aa)). An intrachain disulfide couples cysteine 440 to cysteine 495. Cysteine 495 acts as the Nucleophile in catalysis.

It in the N-terminal section; belongs to the thioredoxin family. In the central section; belongs to the MsrA Met sulfoxide reductase family. This sequence in the C-terminal section; belongs to the MsrB Met sulfoxide reductase family.

It catalyses the reaction L-methionyl-[protein] + [thioredoxin]-disulfide + H2O = L-methionyl-(S)-S-oxide-[protein] + [thioredoxin]-dithiol. It carries out the reaction [thioredoxin]-disulfide + L-methionine + H2O = L-methionine (S)-S-oxide + [thioredoxin]-dithiol. The enzyme catalyses L-methionyl-[protein] + [thioredoxin]-disulfide + H2O = L-methionyl-(R)-S-oxide-[protein] + [thioredoxin]-dithiol. Has an important function as a repair enzyme for proteins that have been inactivated by oxidation. Catalyzes the reversible oxidation-reduction of methionine sulfoxide in proteins to methionine. The sequence is that of Peptide methionine sulfoxide reductase MsrA/MsrB (msrAB) from Neisseria gonorrhoeae.